Consider the following 490-residue polypeptide: Betaine aldehyde dehydrogenase (490 aa).

2 residues coordinate K(+): isoleucine 27 and aspartate 93. 150-152 (GAW) is an NAD(+) binding site. Residue lysine 162 is the Charge relay system of the active site. 176 to 179 (KPSE) is an NAD(+) binding site. Valine 180 provides a ligand contact to K(+). 230 to 233 (GTDT) serves as a coordination point for NAD(+). Leucine 246 contributes to the K(+) binding site. The active-site Proton acceptor is glutamate 252. NAD(+)-binding residues include glycine 254, cysteine 286, and glutamate 387. The active-site Nucleophile is cysteine 286. A Cysteine sulfenic acid (-SOH) modification is found at cysteine 286. 2 residues coordinate K(+): lysine 457 and glycine 460. Glutamate 464 acts as the Charge relay system in catalysis.

It belongs to the aldehyde dehydrogenase family. As to quaternary structure, dimer of dimers. K(+) is required as a cofactor.

It carries out the reaction betaine aldehyde + NAD(+) + H2O = glycine betaine + NADH + 2 H(+). It functions in the pathway amine and polyamine biosynthesis; betaine biosynthesis via choline pathway; betaine from betaine aldehyde: step 1/1. Its function is as follows. Involved in the biosynthesis of the osmoprotectant glycine betaine. Catalyzes the irreversible oxidation of betaine aldehyde to the corresponding acid. This Pseudomonas fluorescens (strain Pf0-1) protein is Betaine aldehyde dehydrogenase.